The primary structure comprises 219 residues: LHFPL tetraspan subfamily member 5 protein (219 aa).

The Cytoplasmic portion of the chain corresponds to 1 to 24; that stretch reads MVKLLPAQEAAKIYHTNYVRNSRA. Residues 25-45 traverse the membrane as a helical segment; it reads VGVMWGTLTICFSVLVMALFI. At 46–98 the chain is on the extracellular side; sequence QPYWIGDSVSTPQAGYFGLFSYCVGNVLSSELICKGGPLDFSSIPSRAFKTAM. A helical membrane pass occupies residues 99–119; that stretch reads FFVALAMFLIIGSIICFSLFF. The Cytoplasmic portion of the chain corresponds to 120–128; it reads VCNTATVYK. A helical transmembrane segment spans residues 129 to 149; sequence ICAWMQLAAATGLMIGCLVYP. At 150–178 the chain is on the extracellular side; sequence DGWDSSEVRRMCGEQTGKYTLGHCTIRWA. Residues 179 to 199 traverse the membrane as a helical segment; the sequence is FMLAILSIGDALILSFLAFVL. The Cytoplasmic portion of the chain corresponds to 200 to 219; sequence GYRQDKLLPDDYKADGNEEV.

This sequence belongs to the LHFP family. In terms of assembly, forms the MET channel composed of TMC (TMC1 or TMC2), TMIE, TOMT, CIB (CIB2 or CIB3), LHPL5 and PCDH15. Interaction with PCDH15 is required for efficient localization to hair bundles.

The protein resides in the cell membrane. Auxiliary subunit of the mechanotransducer (MET) non-specific cation channel complex located at the tips of the shorter stereocilia of cochlear hair cells and that mediates sensory transduction in the auditory system. The MET complex is composed of two dimeric pore-forming ion-conducting transmembrane TMC (TMC1 or TMC2) subunits, and aided by several auxiliary proteins including LHFPL5, TMIE, CIB2/3 and TOMT, and the tip-link PCDH15. Functionally couples PCDH15 to the transduction channel. This Rattus norvegicus (Rat) protein is LHFPL tetraspan subfamily member 5 protein.